Consider the following 289-residue polypeptide: Acetyl-coenzyme A carboxylase carboxyl transferase subunit beta (289 aa).

Residues 24-289 (LWTNCESCGQ…RQKTVSDAAA (266 aa)) enclose the CoA carboxyltransferase N-terminal domain. Positions 28, 31, 47, and 50 each coordinate Zn(2+). A C4-type zinc finger spans residues 28–50 (CESCGQMMLTKELERSEKVCPHC).

Belongs to the AccD/PCCB family. In terms of assembly, acetyl-CoA carboxylase is a heterohexamer composed of biotin carboxyl carrier protein (AccB), biotin carboxylase (AccC) and two subunits each of ACCase subunit alpha (AccA) and ACCase subunit beta (AccD). It depends on Zn(2+) as a cofactor.

It localises to the cytoplasm. It carries out the reaction N(6)-carboxybiotinyl-L-lysyl-[protein] + acetyl-CoA = N(6)-biotinyl-L-lysyl-[protein] + malonyl-CoA. Its pathway is lipid metabolism; malonyl-CoA biosynthesis; malonyl-CoA from acetyl-CoA: step 1/1. In terms of biological role, component of the acetyl coenzyme A carboxylase (ACC) complex. Biotin carboxylase (BC) catalyzes the carboxylation of biotin on its carrier protein (BCCP) and then the CO(2) group is transferred by the transcarboxylase to acetyl-CoA to form malonyl-CoA. The polypeptide is Acetyl-coenzyme A carboxylase carboxyl transferase subunit beta (Gluconobacter oxydans (strain 621H) (Gluconobacter suboxydans)).